The chain runs to 2298 residues: Protein Ycf2 (2298 aa).

1640 to 1647 (GSIGTGRS) contacts ATP.

It belongs to the Ycf2 family.

It localises to the plastid. The protein resides in the chloroplast stroma. Its function is as follows. Probable ATPase of unknown function. Its presence in a non-photosynthetic plant (Epifagus virginiana) and experiments in tobacco indicate that it has an essential function which is probably not related to photosynthesis. The sequence is that of Protein Ycf2 from Carica papaya (Papaya).